The sequence spans 72 residues: DNA-directed RNA polymerase subunit omega (72 aa).

The protein belongs to the RNA polymerase subunit omega family. In terms of assembly, the RNAP catalytic core consists of 2 alpha, 1 beta, 1 beta' and 1 omega subunit. When a sigma factor is associated with the core the holoenzyme is formed, which can initiate transcription.

It catalyses the reaction RNA(n) + a ribonucleoside 5'-triphosphate = RNA(n+1) + diphosphate. Promotes RNA polymerase assembly. Latches the N- and C-terminal regions of the beta' subunit thereby facilitating its interaction with the beta and alpha subunits. The protein is DNA-directed RNA polymerase subunit omega of Lactobacillus johnsonii (strain CNCM I-12250 / La1 / NCC 533).